A 50-amino-acid polypeptide reads, in one-letter code: Basic phospholipase A2 Bmaj-9 (50 aa).

The Ca(2+) site is built by Tyr-27, Gly-29, and Gly-31. Cysteines 28 and 45 form a disulfide. His-48 is a catalytic residue. Residue Asp-49 coordinates Ca(2+).

Belongs to the phospholipase A2 family. Group II subfamily. D49 sub-subfamily. The cofactor is Ca(2+). In terms of tissue distribution, expressed by the venom gland.

The protein localises to the secreted. The catalysed reaction is a 1,2-diacyl-sn-glycero-3-phosphocholine + H2O = a 1-acyl-sn-glycero-3-phosphocholine + a fatty acid + H(+). Functionally, snake venom phospholipase A2 (PLA2) that causes irreversible neuromuscular blockade in chick biventer cervicis muscle preparations. The neuromuscular blockade is mediated by inhibitory action at the presynaptic motor nerve endings. PLA2 catalyzes the calcium-dependent hydrolysis of the 2-acyl groups in 3-sn-phosphoglycerides. This chain is Basic phospholipase A2 Bmaj-9, found in Bothrops marajoensis (Marajo lancehead).